Reading from the N-terminus, the 382-residue chain is Proton extrusion protein PxcA (382 aa).

4 helical membrane passes run 162–182 (ILLL…TYIV), 257–277 (AIKN…VCLV), 305–325 (IILF…TVLL), and 340–360 (FILL…KYWI).

The protein belongs to the CemA family.

It is found in the cell inner membrane. Its function is as follows. Required for H(+) efflux immediately after light irradiation to form a rapid H(+) concentration gradient across the thylakoid membranes. Together with PxcL, contributes to transient H(+) uptake following dark to light transition. The chain is Proton extrusion protein PxcA from Parasynechococcus marenigrum (strain WH8102).